We begin with the raw amino-acid sequence, 200 residues long: Glycerol-3-phosphate acyltransferase (200 aa).

The next 5 membrane-spanning stretches (helical) occupy residues 2–22, 51–71, 84–104, 114–134, and 158–178; these read FNIP…AVIV, KAAA…VLLA, AIAA…FFGF, LGVL…IWLV, and LFFM…ILVL.

This sequence belongs to the PlsY family. Probably interacts with PlsX.

The protein resides in the cell inner membrane. It catalyses the reaction an acyl phosphate + sn-glycerol 3-phosphate = a 1-acyl-sn-glycero-3-phosphate + phosphate. It participates in lipid metabolism; phospholipid metabolism. Catalyzes the transfer of an acyl group from acyl-phosphate (acyl-PO(4)) to glycerol-3-phosphate (G3P) to form lysophosphatidic acid (LPA). This enzyme utilizes acyl-phosphate as fatty acyl donor, but not acyl-CoA or acyl-ACP. In Neisseria gonorrhoeae (strain ATCC 700825 / FA 1090), this protein is Glycerol-3-phosphate acyltransferase.